A 491-amino-acid chain; its full sequence is Feruloyl-CoA synthase (491 aa).

A Mg(2+)-binding site is contributed by threonine 154. Alanine 199, glycine 291, and threonine 295 together coordinate ATP. Glutamate 296 is a Mg(2+) binding site. Positions 374 and 391 each coordinate ATP.

Belongs to the ATP-dependent AMP-binding enzyme family. Mg(2+) serves as cofactor.

It carries out the reaction (E)-ferulate + ATP + CoA = (E)-feruloyl-CoA + AMP + diphosphate. Its function is as follows. Catalyzes the formation of (E)-feruloyl-CoA, AMP and diphosphate from (E)-ferulate, CoA and ATP. Involved in the degradation pathway of lignin-derived aromatic compounds of plant cell walls. Catalyzes the first enzymatic step in the conversion of ferulic acid into high value compound vanillin. This is Feruloyl-CoA synthase from Amycolatopsis sp.